The sequence spans 755 residues: Elongation factor G, mitochondrial (755 aa).

A mitochondrion-targeting transit peptide spans 1 to 38; the sequence is MFKRVGLIAGIAGPVAGSSRFSAVSFSKRAFSASSKRC. The region spanning 63-344 is the tr-type G domain; it reads KKLRNIGISA…AIVEYLPNPS (282 aa). GTP is bound by residues 72-79, 143-147, and 197-200; these read AHIDSGKT, DTPGH, and NKMD.

This sequence belongs to the TRAFAC class translation factor GTPase superfamily. Classic translation factor GTPase family. EF-G/EF-2 subfamily.

Its subcellular location is the mitochondrion. The protein operates within protein biosynthesis; polypeptide chain elongation. Functionally, mitochondrial GTPase that catalyzes the GTP-dependent ribosomal translocation step during translation elongation. During this step, the ribosome changes from the pre-translocational (PRE) to the post-translocational (POST) state as the newly formed A-site-bound peptidyl-tRNA and P-site-bound deacylated tRNA move to the P and E sites, respectively. Catalyzes the coordinated movement of the two tRNA molecules, the mRNA and conformational changes in the ribosome. In Kluyveromyces lactis (strain ATCC 8585 / CBS 2359 / DSM 70799 / NBRC 1267 / NRRL Y-1140 / WM37) (Yeast), this protein is Elongation factor G, mitochondrial.